The sequence spans 240 residues: ATP-dependent dethiobiotin synthetase BioD (240 aa).

Position 12-17 (Glu-12–Val-17) interacts with ATP. Thr-16 is a Mg(2+) binding site. Residue Lys-37 is part of the active site. Substrate is bound at residue Ser-41. ATP-binding positions include Asp-54, Glu-115–Gly-118, Asn-179–Gln-180, and Pro-207–Ile-209. Asp-54 and Glu-115 together coordinate Mg(2+).

The protein belongs to the dethiobiotin synthetase family. Homodimer. Mg(2+) is required as a cofactor.

The protein localises to the cytoplasm. The enzyme catalyses (7R,8S)-7,8-diammoniononanoate + CO2 + ATP = (4R,5S)-dethiobiotin + ADP + phosphate + 3 H(+). It participates in cofactor biosynthesis; biotin biosynthesis; biotin from 7,8-diaminononanoate: step 1/2. Its function is as follows. Catalyzes a mechanistically unusual reaction, the ATP-dependent insertion of CO2 between the N7 and N8 nitrogen atoms of 7,8-diaminopelargonic acid (DAPA, also called 7,8-diammoniononanoate) to form a ureido ring. The polypeptide is ATP-dependent dethiobiotin synthetase BioD (Clostridium acetobutylicum (strain ATCC 824 / DSM 792 / JCM 1419 / IAM 19013 / LMG 5710 / NBRC 13948 / NRRL B-527 / VKM B-1787 / 2291 / W)).